A 276-amino-acid polypeptide reads, in one-letter code: Large ribosomal subunit protein uL2 (276 aa).

Disordered regions lie at residues 35 to 58 (RKLS…GGGH) and 218 to 276 (RPIT…KNRK). Residues 255-276 (RRPKKASNKMIVRRRPNGKNRK) show a composition bias toward basic residues.

This sequence belongs to the universal ribosomal protein uL2 family. As to quaternary structure, part of the 50S ribosomal subunit. Forms a bridge to the 30S subunit in the 70S ribosome.

Its function is as follows. One of the primary rRNA binding proteins. Required for association of the 30S and 50S subunits to form the 70S ribosome, for tRNA binding and peptide bond formation. It has been suggested to have peptidyltransferase activity; this is somewhat controversial. Makes several contacts with the 16S rRNA in the 70S ribosome. In Bifidobacterium adolescentis (strain ATCC 15703 / DSM 20083 / NCTC 11814 / E194a), this protein is Large ribosomal subunit protein uL2.